The following is a 545-amino-acid chain: RAN GTPase-activating protein 2 (545 aa).

The tract at residues 1–116 is WPP; it reads MADILDSRPH…VAARELISED (116 aa). LRR repeat units lie at residues 213–236, 241–264, 269–296, 325–348, 353–380, 382–405, 410–433, 439–462, and 467–494; these read GSILSSLNLSDNALGEKGVRAFGA, LSSLEELYLMNDGISKEAAQAVSE, TENLRVLHFHNNMTGDEGALAIAEVVKR, CTHMEKLDLRDNMFGTEAGVSLSK, FKHMTELYLSYLNLEDEGAIAIVNALKE, ASPIEVLEMAGNDITVEAASAIAA, KQDLNKLNLSENELKDEGCVQIAN, HSKLQYIDMSTNYIRRAGARALAH, and KEAFKLLNIDGNIISEEGIEELKEIFKK. Positions 496 to 545 are disordered; the sequence is PELLGALDENDPDGEEDDDDEEDEEDEENEGNGNGELESKLKNLEVNQED. Acidic residues predominate over residues 503–525; the sequence is DENDPDGEEDDDDEEDEEDEENE.

The protein belongs to the RNA1 family. In terms of assembly, homodimer. Interacts with WIP1 and WIP2 through its WPP domain. Component of Ran complexes at least composed of WIT1 or WIT2, RANGAP1 or RANGAP2, and WIP1 or WIP2 or WIP3. Interacts with WIT1.

The protein resides in the cytoplasm. The protein localises to the nucleus membrane. Its subcellular location is the cytoskeleton. It localises to the spindle. It is found in the phragmoplast. Its function is as follows. GTPase activator for the nuclear Ras-related regulatory protein Ran, converting it to the putatively inactive GDP-bound state. This is RAN GTPase-activating protein 2 (RANGAP2) from Arabidopsis thaliana (Mouse-ear cress).